Reading from the N-terminus, the 203-residue chain is 2-phospho-L-lactate guanylyltransferase (203 aa).

The protein belongs to the CofC family. Homodimer.

The catalysed reaction is (2S)-2-phospholactate + GTP + H(+) = (2S)-lactyl-2-diphospho-5'-guanosine + diphosphate. It participates in cofactor biosynthesis; coenzyme F420 biosynthesis. Functionally, guanylyltransferase that catalyzes the activation of (2S)-2-phospholactate (2-PL) as (2S)-lactyl-2-diphospho-5'-guanosine, via the condensation of 2-PL with GTP. It is involved in the biosynthesis of coenzyme F420, a hydride carrier cofactor. The polypeptide is 2-phospho-L-lactate guanylyltransferase (Halomicrobium mukohataei (strain ATCC 700874 / DSM 12286 / JCM 9738 / NCIMB 13541) (Haloarcula mukohataei)).